A 287-amino-acid chain; its full sequence is ATP synthase gamma chain (287 aa).

The protein belongs to the ATPase gamma chain family. As to quaternary structure, F-type ATPases have 2 components, CF(1) - the catalytic core - and CF(0) - the membrane proton channel. CF(1) has five subunits: alpha(3), beta(3), gamma(1), delta(1), epsilon(1). CF(0) has three main subunits: a, b and c.

Its subcellular location is the cell inner membrane. In terms of biological role, produces ATP from ADP in the presence of a proton gradient across the membrane. The gamma chain is believed to be important in regulating ATPase activity and the flow of protons through the CF(0) complex. The chain is ATP synthase gamma chain from Cronobacter sakazakii (strain ATCC BAA-894) (Enterobacter sakazakii).